A 311-amino-acid chain; its full sequence is N-acetylmuramic acid 6-phosphate etherase (311 aa).

The 165-residue stretch at 66–230 folds into the SIS domain; the sequence is VVEAFEADGR…TTAAMVRLGK (165 aa). Glutamate 94 functions as the Proton donor in the catalytic mechanism. The active site involves glutamate 125.

It belongs to the GCKR-like family. MurNAc-6-P etherase subfamily. Homodimer.

The catalysed reaction is N-acetyl-D-muramate 6-phosphate + H2O = N-acetyl-D-glucosamine 6-phosphate + (R)-lactate. It functions in the pathway amino-sugar metabolism; N-acetylmuramate degradation. Functionally, specifically catalyzes the cleavage of the D-lactyl ether substituent of MurNAc 6-phosphate, producing GlcNAc 6-phosphate and D-lactate. In Salinibacter ruber (strain DSM 13855 / M31), this protein is N-acetylmuramic acid 6-phosphate etherase.